A 112-amino-acid chain; its full sequence is UPF0329 protein ECU11_0080 (112 aa).

The protein belongs to the UPF0329 family.

In Encephalitozoon cuniculi (strain GB-M1) (Microsporidian parasite), this protein is UPF0329 protein ECU11_0080.